The chain runs to 2370 residues: Genome polyprotein (2370 aa).

Gly-112 carries N-myristoyl glycine; by host lipidation. Disordered regions lie at residues 140 to 173 (VGDM…GNVV) and 704 to 736 (GADG…FDYP). A compositionally biased stretch (low complexity) spans 154-171 (GSNKGGSSTSPKSTSNGN). A compositionally biased stretch (polar residues) spans 713–725 (APTSDLSDGNPTT). Residues 1358 to 1522 (YSTALSAISL…AAFSAAAALK (165 aa)) form the SF3 helicase domain. Position 1384–1391 (1384–1391 (GPPGTGKS)) interacts with ATP. A lipid anchor (N-myristoyl glycine; by host) is attached at Gly-1597. The helical transmembrane segment at 1646–1666 (IFAASSFLSLIAATLTIVRCL) threads the bilayer. Residues 1674-1696 (GAYSGTPVPKPRKKDLPKQPVYS) form a disordered region. Tyr-1676 is subject to O-(5'-phospho-RNA)-tyrosine. In terms of domain architecture, Peptidase C3 spans 1697 to 1886 (GPVRRQGFDP…FSARLTPERV (190 aa)). Residues His-1745, Glu-1776, and Cys-1849 each act as for protease 3C activity in the active site. The span at 2007 to 2016 (SPGYPWTTQG) shows a compositional bias: polar residues. A disordered region spans residues 2007–2026 (SPGYPWTTQGRSRRSLFDED). Positions 2122–2239 (SNVWSIDYSC…GSNQDFHPRE (118 aa)) constitute a RdRp catalytic domain. Residues Asp-2128 and Asp-2225 each act as for RdRp activity in the active site.

As to quaternary structure, interacts with capsid protein VP1. Interacts with capsid protein VP3. Interacts with capsid protein VP0. Interacts with capsid protein VP3. In terms of assembly, interacts with capsid protein VP0. Interacts with capsid protein VP1. As to quaternary structure, homodimer. Interacts with protein 2B. Interacts with protein 2C. Homodimer. Interacts with host ABCD3. Interacts with protein 2A. Interacts with host ACBD3. In terms of assembly, homodimer. Interacts with host ABCD3. Interacts with protein 2A. Interacts with protein 3A. Interacts with protein 3C. Interacts with host ACBD3. As to quaternary structure, homodimer. Interacts with host ABCD3 (via GOLD domain) and PI4KB; these interactions allow the formation of a viral protein/ACBD3/PI4KB complex in order to synthesize PI4P at the viral RNA replication sites. Interacts with protein 2C. Interacts with protein 3C. Protein 3C: Interacts with protein 2A. Protein 3C: Interacts with protein 2C. In terms of processing, specific enzymatic cleavages by the viral protease in vivo yield a variety of precursors and mature proteins. The leader protein-VP0 junction is cleaved by 3C proteinase. The VP1/2A junction is cleaved by the protein 3CD in association with protein 2A. Uridylylated by the polymerase and is covalently linked to the 5'-end of genomic RNA. This uridylylated form acts as a nucleotide-peptide primer for the polymerase.

The protein resides in the virion. Its subcellular location is the host cytoplasm. The protein localises to the host cytoplasmic vesicle membrane. It localises to the host Golgi apparatus membrane. It carries out the reaction RNA(n) + a ribonucleoside 5'-triphosphate = RNA(n+1) + diphosphate. It catalyses the reaction Selective cleavage of Gln-|-Gly bond in the poliovirus polyprotein. In other picornavirus reactions Glu may be substituted for Gln, and Ser or Thr for Gly.. The enzyme catalyses ATP + H2O = ADP + phosphate + H(+). In terms of biological role, required for viral RNA replication and viral RNA encapsidation. Does not have any proteolytic activity. Functionally, forms an icosahedral capsid of pseudo T=3 symmetry with capsid proteins VP0 and VP3. Together they form an icosahedral capsid composed of 60 copies of each VP0, VP1, and VP3. All the three latter proteins contain a beta-sheet structure called beta-barrel jelly roll. Forms an icosahedral capsid of pseudo T=3 symmetry with capsid proteins VP1 and VP3. Together they form an icosahedral capsid composed of 60 copies of each VP0, VP1, and VP3. All the three latter proteins contain a beta-sheet structure called beta-barrel jelly roll. Its function is as follows. Forms an icosahedral capsid of pseudo T=3 symmetry with capsid proteins VP0 and VP1. Together they form an icosahedral capsid composed of 60 copies of each VP0, VP1, and VP3. All the three latter proteins contain a beta-sheet structure called beta-barrel jelly roll. In terms of biological role, required for viral RNA replication. Does not have any proteolytic activity. Functionally, affects membrane integrity and causes an increase in membrane permeability. Induces and associates with structural rearrangements of intracellular membranes. Displays RNA-binding, nucleotide binding and NTPase activities. May play a role in virion morphogenesis and viral RNA encapsidation by interacting with the capsid protein VP3. Its function is as follows. Serves as membrane anchor via its hydrophobic domain. Plays an essential role in viral RNA replication by recruiting PI4KB at the viral replication sites, thereby allowing the formation of rearranged membranous structures where viral replication takes place. In terms of biological role, forms a primer, VPg-pU, which is utilized by the polymerase for the initiation of RNA chains. Functionally, cysteine protease that generates mature viral proteins from the precursor polyprotein. In addition to its proteolytic activity, it binds to viral RNA, and thus influences viral genome replication. RNA and substrate cooperatively bind to the protease. Replicates the genomic and antigenomic RNAs by recognizing replications specific signals. Performs VPg uridylylation. In Homo sapiens (Human), this protein is Genome polyprotein.